The following is a 596-amino-acid chain: Elongation factor 4 (596 aa).

One can recognise a tr-type G domain in the interval 2–184 (KHIRNFSIIA…EIIAKIPPPV (183 aa)). Residues 14–19 (DHGKST) and 131–134 (NKID) contribute to the GTP site.

It belongs to the TRAFAC class translation factor GTPase superfamily. Classic translation factor GTPase family. LepA subfamily.

It localises to the cell inner membrane. It catalyses the reaction GTP + H2O = GDP + phosphate + H(+). In terms of biological role, required for accurate and efficient protein synthesis under certain stress conditions. May act as a fidelity factor of the translation reaction, by catalyzing a one-codon backward translocation of tRNAs on improperly translocated ribosomes. Back-translocation proceeds from a post-translocation (POST) complex to a pre-translocation (PRE) complex, thus giving elongation factor G a second chance to translocate the tRNAs correctly. Binds to ribosomes in a GTP-dependent manner. The polypeptide is Elongation factor 4 (Shewanella frigidimarina (strain NCIMB 400)).